We begin with the raw amino-acid sequence, 371 residues long: Opine oxidase subunit B (371 aa).

Heterodimer of a subunit A and a subunit B.

The protein operates within opine metabolism; octopine degradation. Oxidative cleavage of octopine into L-arginine and pyruvate. This chain is Opine oxidase subunit B (ooxB), found in Rhizobium meliloti (Ensifer meliloti).